Consider the following 482-residue polypeptide: UDP-glycosyltransferase 1 (482 aa).

Asn243 carries an N-linked (GlcNAc...) asparagine glycan. A helical membrane pass occupies residues 450-470; sequence IYLVYALVLGSAWWIGKTILG.

This sequence belongs to the glycosyltransferase 28 family.

Its subcellular location is the membrane. It carries out the reaction exophillate aglycone + UDP-alpha-D-glucose = exophillate + UDP + H(+). It participates in secondary metabolite biosynthesis. In terms of biological role, acts as a depside 2-O-glucosyltransferase that catalyzes the first glycosylation step during phaeomoniecin D biosynthesis by producing the intermediate exophillic acid which is further O-galactosylated into phaeomoniecin D by the C-galactosyltransferase OGT2. In Phaeomoniella chlamydospora (Phaeoacremonium chlamydosporum), this protein is UDP-glycosyltransferase 1.